Consider the following 173-residue polypeptide: CASP-like protein 2D1 (173 aa).

Residues 1–9 are Cytoplasmic-facing; the sequence is MAPLLKLLD. A helical membrane pass occupies residues 10 to 29; sequence SSLRVSVIPLSAATIWLTVT. Residues 30-50 are Extracellular-facing; sequence NHQDNSSYGNLKYSNIMGLKY. N-linked (GlcNAc...) asparagine glycosylation is present at N34. A helical transmembrane segment spans residues 51–71; that stretch reads MVCISAICASYAFVAAVSIWI. The Cytoplasmic segment spans residues 72–86; that stretch reads KCLVNKVWLFFVSDQ. The helical transmembrane segment at 87–107 threads the bilayer; that stretch reads IIAYLMVTSVAAAMEILYIAY. The Extracellular segment spans residues 108–131; sequence NGDQKVTWSEACTSYGKFCNGMKT. Residues 132 to 152 form a helical membrane-spanning segment; sequence ALILHALTLCFFIVLAVISAY. Residues 153-173 lie on the Cytoplasmic side of the membrane; it reads RAFSMYQPPVSSKETVEGDAT.

It belongs to the Casparian strip membrane proteins (CASP) family. As to quaternary structure, homodimer and heterodimers.

It localises to the cell membrane. This is CASP-like protein 2D1 from Ricinus communis (Castor bean).